Reading from the N-terminus, the 86-residue chain is Mu-theraphotoxin-Hhn1c (86 aa).

The N-terminal stretch at 1–21 (MKASMFLALAGLALLFVVCYA) is a signal peptide. Residues 22–49 (SESEEKEFSNELLSSVLAVDDNSKGEER) constitute a propeptide that is removed on maturation. Disulfide bonds link Cys-51/Cys-66, Cys-58/Cys-73, and Cys-65/Cys-80. An Isoleucine amide modification is found at Ile-84.

This sequence belongs to the neurotoxin 10 (Hwtx-1) family. 22 (Htx-4) subfamily. In terms of assembly, monomer. As to expression, expressed by the venom gland.

It is found in the secreted. In terms of biological role, neurotoxin. Selectively blocks neuronal tetrodotoxin-sensitive voltage-gated sodium channels (Nav). Does not affect tetrodotoxin-resistant voltage-gated sodium channels or calcium channels. The chain is Mu-theraphotoxin-Hhn1c from Cyriopagopus hainanus (Chinese bird spider).